Here is a 422-residue protein sequence, read N- to C-terminus: Serine protease inhibitor A3A (422 aa).

Residues 1–17 form the signal peptide; sequence MAFIAALGLLMVGICPA. N-linked (GlcNAc...) asparagine glycans are attached at residues asparagine 218, asparagine 230, and asparagine 271. Residues 369-394 form an RCL region; the sequence is HTEADVITIARYNFQSAKIKAKIVKV.

Belongs to the serpin family.

The protein resides in the secreted. The sequence is that of Serine protease inhibitor A3A (Serpina3a) from Mus musculus (Mouse).